The following is a 472-amino-acid chain: Uronate isomerase (472 aa).

This sequence belongs to the metallo-dependent hydrolases superfamily. Uronate isomerase family.

It carries out the reaction D-glucuronate = D-fructuronate. It catalyses the reaction aldehydo-D-galacturonate = keto-D-tagaturonate. It functions in the pathway carbohydrate metabolism; pentose and glucuronate interconversion. This is Uronate isomerase from Nostoc punctiforme (strain ATCC 29133 / PCC 73102).